Consider the following 376-residue polypeptide: D-alanine--D-alanine ligase (376 aa).

Positions 150–358 (KIIFEKEGLP…YSELINKLIE (209 aa)) constitute an ATP-grasp domain. 183–238 (EGRLTYPCFVKPSNAGSSVGVNKASDRESLVKALNIAAKNDRRILVEEFINGREIE) provides a ligand contact to ATP. Mg(2+) contacts are provided by D311, E325, and N327.

The protein belongs to the D-alanine--D-alanine ligase family. The cofactor is Mg(2+). Mn(2+) serves as cofactor.

It localises to the cytoplasm. The enzyme catalyses 2 D-alanine + ATP = D-alanyl-D-alanine + ADP + phosphate + H(+). The protein operates within cell wall biogenesis; peptidoglycan biosynthesis. In terms of biological role, cell wall formation. This chain is D-alanine--D-alanine ligase, found in Ruminiclostridium cellulolyticum (strain ATCC 35319 / DSM 5812 / JCM 6584 / H10) (Clostridium cellulolyticum).